Consider the following 197-residue polypeptide: FMN-dependent NADH:quinone oxidoreductase (197 aa).

Ser-10 provides a ligand contact to FMN.

It belongs to the azoreductase type 1 family. In terms of assembly, homodimer. FMN is required as a cofactor.

It catalyses the reaction 2 a quinone + NADH + H(+) = 2 a 1,4-benzosemiquinone + NAD(+). The catalysed reaction is N,N-dimethyl-1,4-phenylenediamine + anthranilate + 2 NAD(+) = 2-(4-dimethylaminophenyl)diazenylbenzoate + 2 NADH + 2 H(+). In terms of biological role, quinone reductase that provides resistance to thiol-specific stress caused by electrophilic quinones. Its function is as follows. Also exhibits azoreductase activity. Catalyzes the reductive cleavage of the azo bond in aromatic azo compounds to the corresponding amines. The sequence is that of FMN-dependent NADH:quinone oxidoreductase from Mycoplasma genitalium (strain ATCC 33530 / DSM 19775 / NCTC 10195 / G37) (Mycoplasmoides genitalium).